A 203-amino-acid chain; its full sequence is Orotate phosphoribosyltransferase (203 aa).

5-phospho-alpha-D-ribose 1-diphosphate contacts are provided by residues Arg-94, Lys-95, Lys-98, His-100, and 119–127 (DDVATTGGS). Residues Thr-123 and Arg-151 each contribute to the orotate site.

Belongs to the purine/pyrimidine phosphoribosyltransferase family. PyrE subfamily. Homodimer. The cofactor is Mg(2+).

It catalyses the reaction orotidine 5'-phosphate + diphosphate = orotate + 5-phospho-alpha-D-ribose 1-diphosphate. It functions in the pathway pyrimidine metabolism; UMP biosynthesis via de novo pathway; UMP from orotate: step 1/2. Catalyzes the transfer of a ribosyl phosphate group from 5-phosphoribose 1-diphosphate to orotate, leading to the formation of orotidine monophosphate (OMP). In Staphylothermus marinus (strain ATCC 43588 / DSM 3639 / JCM 9404 / F1), this protein is Orotate phosphoribosyltransferase.